The chain runs to 100 residues: Omega toxin Ap2 (100 aa).

A signal peptide spans 1-22 (MNTTQVILFAVVLVLTVTVGQA). Residues 23–57 (DEDSAETSLLRKLEEAEASMFGQYLEESKNSPEQR) constitute a propeptide that is removed on maturation. 3 disulfides stabilise this stretch: C58-C74, C65-C79, and C73-C94. At S99 the chain carries Serine amide.

It belongs to the neurotoxin 14 (magi-1) family. 08 (Ltx-4) subfamily. Expressed by the venom duct.

The protein localises to the secreted. Functionally, inhibits 31.17% of Cav2.1/CACNA1A current at 1 uM concentration. This chain is Omega toxin Ap2, found in Acanthoscurria paulensis (Brazilian giant black tarantula spider).